Consider the following 298-residue polypeptide: Mitochondrial 2-oxodicarboxylate carrier (298 aa).

Solcar repeat units follow at residues 10 to 99, 106 to 195, and 204 to 293; these read HETS…YKKF, SPGL…VKNI, and LEFL…TYAW. The next 6 helical transmembrane spans lie at 16 to 36, 69 to 88, 112 to 132, 166 to 186, 204 to 224, and 276 to 296; these read VAAG…LDVV, FGFY…KRAV, LIAG…FEVV, GLNK…MVYF, LEFL…SVFN, and LGPG…WLQE.

This sequence belongs to the mitochondrial carrier (TC 2.A.29) family.

The protein localises to the mitochondrion inner membrane. The enzyme catalyses 2-oxoadipate(in) + 2-oxoglutarate(out) = 2-oxoadipate(out) + 2-oxoglutarate(in). The catalysed reaction is hexanedioate(in) + 2-oxoglutarate(out) = hexanedioate(out) + 2-oxoglutarate(in). It carries out the reaction L-2-aminoadipate(in) + 2-oxoglutarate(out) = L-2-aminoadipate(out) + 2-oxoglutarate(in). It catalyses the reaction glutarate(in) + 2-oxoglutarate(out) = glutarate(out) + 2-oxoglutarate(in). The enzyme catalyses 2-oxoheptanedioate(in) + 2-oxoglutarate(out) = 2-oxoheptanedioate(out) + 2-oxoglutarate(in). The catalysed reaction is heptanedioate(in) + 2-oxoglutarate(out) = heptanedioate(out) + 2-oxoglutarate(in). It carries out the reaction citrate(in) + 2-oxoglutarate(out) = citrate(out) + 2-oxoglutarate(in). Transports dicarboxylates across the inner membranes of mitochondria by a counter-exchange mechanism. Can transport 2-oxoadipate (2-oxohexanedioate), 2-oxoglutarate, adipate (hexanedioate), glutarate, and to a lesser extent, pimelate (heptanedioate), 2-oxopimelate (2-oxoheptanedioate), 2-aminoadipate (2-aminohexanedioate), oxaloacetate, and citrate. Plays a central role in catabolism of lysine, hydroxylysine, and tryptophan, by transporting common metabolite intermediates (such as 2-oxoadipate) into the mitochondria, where it is converted into acetyl-CoA and can enter the citric acid (TCA) cycle. The sequence is that of Mitochondrial 2-oxodicarboxylate carrier (Slc25a21) from Mus musculus (Mouse).